Consider the following 150-residue polypeptide: C-type lectin mosGCTL-7 (150 aa).

The signal sequence occupies residues 1–17 (MQLVHVLVVLLSVVAHA). One can recognise a C-type lectin domain in the interval 18–140 (KKFFIPNLKA…CRGFKAYIVC (123 aa)). N-linked (GlcNAc...) asparagine glycosylation is present at N67. C111 and C131 form a disulfide bridge.

As to quaternary structure, interacts with putative receptor-type tyrosine-protein phosphatase mosPTP-1; the interaction probably mediates the recruitment of Japanese encephalitis virus particles in complex with C-type lectin mosGCTL-7 to the cell surface. In terms of assembly, (Microbial infection) Interacts with envelope protein E (glycosylated) of Japanese encephalitis virus in a calcium-dependent manner.

Its subcellular location is the secreted. Functionally, carbohydrate-binding protein. In terms of biological role, (Microbial infection) Facilitates Japanese encephalitis virus infection in mosquitoes probably via capturing viral particles and presenting them to a ligand on the cell surface, thereby facilitating viral entry. This Aedes aegypti (Yellowfever mosquito) protein is C-type lectin mosGCTL-7.